A 496-amino-acid chain; its full sequence is tRNA-2-methylthio-N(6)-dimethylallyladenosine synthase (496 aa).

One can recognise an MTTase N-terminal domain in the interval 10–126 (RTYEVRTYGC…LPALLERARV (117 aa)). [4Fe-4S] cluster contacts are provided by cysteine 19, cysteine 55, cysteine 89, cysteine 163, cysteine 167, and cysteine 170. Residues 149 to 380 (RESAYAAWVS…ALVNEIAWEE (232 aa)) enclose the Radical SAM core domain. Residues 382 to 451 (KRLVGRRVEL…PHHLVADGPV (70 aa)) enclose the TRAM domain. Residues 465-496 (ARNAAPAPSSGVTLGMPTVGAPAPLPDAPACR) form a disordered region. The span at 487–496 (APLPDAPACR) shows a compositional bias: pro residues.

It belongs to the methylthiotransferase family. MiaB subfamily. Monomer. It depends on [4Fe-4S] cluster as a cofactor.

It localises to the cytoplasm. It carries out the reaction N(6)-dimethylallyladenosine(37) in tRNA + (sulfur carrier)-SH + AH2 + 2 S-adenosyl-L-methionine = 2-methylsulfanyl-N(6)-dimethylallyladenosine(37) in tRNA + (sulfur carrier)-H + 5'-deoxyadenosine + L-methionine + A + S-adenosyl-L-homocysteine + 2 H(+). Its function is as follows. Catalyzes the methylthiolation of N6-(dimethylallyl)adenosine (i(6)A), leading to the formation of 2-methylthio-N6-(dimethylallyl)adenosine (ms(2)i(6)A) at position 37 in tRNAs that read codons beginning with uridine. The polypeptide is tRNA-2-methylthio-N(6)-dimethylallyladenosine synthase (Nocardioides sp. (strain ATCC BAA-499 / JS614)).